We begin with the raw amino-acid sequence, 426 residues long: PI-PLC X domain-containing protein At5g67130 (426 aa).

The N-terminal stretch at 1-28 (MSACINGLCRAVTVSLLLLLLSFSFSSA) is a signal peptide. In terms of domain architecture, PI-PLC X-box spans 76–232 (IINGLPFNKY…MVQENHRLLV (157 aa)). 2 N-linked (GlcNAc...) asparagine glycosylation sites follow: N151 and N255. The tract at residues 258–277 (GDPGVKRGSCPNRKESQPLN) is disordered. A glycan (N-linked (GlcNAc...) asparagine) is linked at N370. A lipid anchor (GPI-anchor amidated serine) is attached at S404. The propeptide at 405–426 (VAQLNNIVVFCFSLLPLLIFLL) is removed in mature form.

It is found in the cell membrane. The polypeptide is PI-PLC X domain-containing protein At5g67130 (Arabidopsis thaliana (Mouse-ear cress)).